A 256-amino-acid chain; its full sequence is 5'-nucleotidase SurE (256 aa).

Residues aspartate 8, aspartate 9, serine 40, and asparagine 92 each contribute to the a divalent metal cation site.

It belongs to the SurE nucleotidase family. Requires a divalent metal cation as cofactor.

It is found in the cytoplasm. The catalysed reaction is a ribonucleoside 5'-phosphate + H2O = a ribonucleoside + phosphate. In terms of biological role, nucleotidase that shows phosphatase activity on nucleoside 5'-monophosphates. In Allorhizobium ampelinum (strain ATCC BAA-846 / DSM 112012 / S4) (Agrobacterium vitis (strain S4)), this protein is 5'-nucleotidase SurE.